The following is a 335-amino-acid chain: Succinylglutamate desuccinylase (335 aa).

3 residues coordinate Zn(2+): His59, Glu62, and His151. The active site involves Glu215.

Belongs to the AspA/AstE family. Succinylglutamate desuccinylase subfamily. The cofactor is Zn(2+).

It catalyses the reaction N-succinyl-L-glutamate + H2O = L-glutamate + succinate. It functions in the pathway amino-acid degradation; L-arginine degradation via AST pathway; L-glutamate and succinate from L-arginine: step 5/5. Transforms N(2)-succinylglutamate into succinate and glutamate. The protein is Succinylglutamate desuccinylase of Pseudomonas syringae pv. tomato (strain ATCC BAA-871 / DC3000).